The chain runs to 240 residues: UDP-2,3-diacylglucosamine hydrolase (240 aa).

5 residues coordinate Mn(2+): D8, H10, D41, N79, and H114. 79–80 (NR) contacts substrate. 5 residues coordinate substrate: D122, S160, N164, K167, and H195. Mn(2+)-binding residues include H195 and H197.

The protein belongs to the LpxH family. Requires Mn(2+) as cofactor.

Its subcellular location is the cell inner membrane. It catalyses the reaction UDP-2-N,3-O-bis[(3R)-3-hydroxytetradecanoyl]-alpha-D-glucosamine + H2O = 2-N,3-O-bis[(3R)-3-hydroxytetradecanoyl]-alpha-D-glucosaminyl 1-phosphate + UMP + 2 H(+). It participates in glycolipid biosynthesis; lipid IV(A) biosynthesis; lipid IV(A) from (3R)-3-hydroxytetradecanoyl-[acyl-carrier-protein] and UDP-N-acetyl-alpha-D-glucosamine: step 4/6. Functionally, hydrolyzes the pyrophosphate bond of UDP-2,3-diacylglucosamine to yield 2,3-diacylglucosamine 1-phosphate (lipid X) and UMP by catalyzing the attack of water at the alpha-P atom. Involved in the biosynthesis of lipid A, a phosphorylated glycolipid that anchors the lipopolysaccharide to the outer membrane of the cell. In Yersinia enterocolitica serotype O:8 / biotype 1B (strain NCTC 13174 / 8081), this protein is UDP-2,3-diacylglucosamine hydrolase.